The chain runs to 141 residues: Calcium-binding protein SPEC 2D (141 aa).

4 EF-hand domains span residues 10-42 (DQIKEYKTKFDAFDRNNDGNFPTMFLGNAMKSV), 43-72 (GHVLTAAELENSRRVRKGTTTFPQFLAMIL), 73-107 (DKKCRKVFKAMDKDDKDKLLSADEVRQAMLSFDRQ), and 108-141 (ITEDKIKEMIEKADFPNDGKCSLEEFVKMVMNFC). Ca(2+) contacts are provided by D23, N25, D27, and N29. Residues D84, D86, K90, D95, D121, D125, K127, and E132 each contribute to the Ca(2+) site.

In terms of tissue distribution, found in cell lineages giving rise to the aboral ectoderm, a squamous epithelium covering the surface of the late stage embryo and larva.

Calcium-binding protein involved in larval development and metamorphosis. Likely to function as calcium buffers mediating the transport of calcium from the sea water to the blastocoel where calcium is required for skeleton formation. This Strongylocentrotus purpuratus (Purple sea urchin) protein is Calcium-binding protein SPEC 2D (SPEC2D).